Consider the following 248-residue polypeptide: Probable 2-oxo-3-(5-oxofuran-2-ylidene)propanoate lactonase (248 aa).

Active-site residues include Cys-123, Asp-180, and His-212.

It belongs to the dienelactone hydrolase family.

It carries out the reaction 2-oxo-3-(5-oxofuran-2-ylidene)propanoate + H2O = 3-maleylpyruvate + H(+). Functionally, involved in the 5-nitroanthranilic acid (5NAA) degradation. Catalyzes the hydrolysis of the lactone to produce maleylpyruvate biodegradation of 5-nitroanthranilate. The protein is Probable 2-oxo-3-(5-oxofuran-2-ylidene)propanoate lactonase (naaC) of Bradyrhizobium sp.